The primary structure comprises 221 residues: Urease accessory protein UreF (221 aa).

This sequence belongs to the UreF family. UreD, UreF and UreG form a complex that acts as a GTP-hydrolysis-dependent molecular chaperone, activating the urease apoprotein by helping to assemble the nickel containing metallocenter of UreC. The UreE protein probably delivers the nickel.

It localises to the cytoplasm. Functionally, required for maturation of urease via the functional incorporation of the urease nickel metallocenter. The polypeptide is Urease accessory protein UreF (Vibrio parahaemolyticus).